Here is a 348-residue protein sequence, read N- to C-terminus: Putative methylesterase 14, chloroplastic (348 aa).

Disordered regions lie at residues 1–29 and 60–80; these read MGNKIISMMKKDSKDGGGGGSKSKRMNRS and GSMSRRVGSTSTRKRTLSDPF. The transit peptide at 1–76 directs the protein to the chloroplast; the sequence is MGNKIISMMK…GSTSTRKRTL (76 aa). Ser-77 carries the post-translational modification Phosphoserine. Ser-172 acts as the Acyl-ester intermediate in catalysis. Active-site charge relay system residues include Asp-299 and His-327.

The protein belongs to the AB hydrolase superfamily. Methylesterase family.

The protein resides in the plastid. The protein localises to the chloroplast. Functionally, putative methylesterase. This is Putative methylesterase 14, chloroplastic from Arabidopsis thaliana (Mouse-ear cress).